The sequence spans 669 residues: Glutamate--cysteine ligase (669 aa).

Belongs to the glutamate--cysteine ligase type 3 family. As to quaternary structure, heterodimer of a catalytic heavy chain and a regulatory light chain.

The catalysed reaction is L-cysteine + L-glutamate + ATP = gamma-L-glutamyl-L-cysteine + ADP + phosphate + H(+). Its pathway is sulfur metabolism; glutathione biosynthesis; glutathione from L-cysteine and L-glutamate: step 1/2. Its function is as follows. Catalyzes the ATP-dependent ligation of L-glutamate and L-cysteine and participates in the first and rate-limiting step in glutathione biosynthesis. The chain is Glutamate--cysteine ligase (gcs1) from Schizosaccharomyces pombe (strain 972 / ATCC 24843) (Fission yeast).